A 428-amino-acid polypeptide reads, in one-letter code: Histidine--tRNA ligase (428 aa).

This sequence belongs to the class-II aminoacyl-tRNA synthetase family. Homodimer.

It localises to the cytoplasm. The catalysed reaction is tRNA(His) + L-histidine + ATP = L-histidyl-tRNA(His) + AMP + diphosphate + H(+). The polypeptide is Histidine--tRNA ligase (Buchnera aphidicola subsp. Schizaphis graminum (strain Sg)).